A 275-amino-acid chain; its full sequence is S-methyl-5'-thioadenosine phosphorylase (275 aa).

Residues Ser-20, 62–63, and 95–96 each bind phosphate; these read RH and SA. Intrachain disulfides connect Cys-143/Cys-210, Cys-205/Cys-266, and Cys-264/Cys-267. Residue Met-195 coordinates substrate. Thr-196 lines the phosphate pocket. 219–221 provides a ligand contact to substrate; that stretch reads DYD.

Belongs to the PNP/MTAP phosphorylase family. MTAP subfamily. As to quaternary structure, homohexamer. Dimer of a homotrimer.

The enzyme catalyses S-methyl-5'-thioadenosine + phosphate = 5-(methylsulfanyl)-alpha-D-ribose 1-phosphate + adenine. It participates in amino-acid biosynthesis; L-methionine biosynthesis via salvage pathway; S-methyl-5-thio-alpha-D-ribose 1-phosphate from S-methyl-5'-thioadenosine (phosphorylase route): step 1/1. In terms of biological role, catalyzes the reversible phosphorylation of S-methyl-5'-thioadenosine (MTA) to adenine and 5-methylthioribose-1-phosphate. Involved in the breakdown of MTA, a major by-product of polyamine biosynthesis. Responsible for the first step in the methionine salvage pathway after MTA has been generated from S-adenosylmethionine. Has broad substrate specificity with 6-aminopurine nucleosides as preferred substrates. This Aeropyrum pernix (strain ATCC 700893 / DSM 11879 / JCM 9820 / NBRC 100138 / K1) protein is S-methyl-5'-thioadenosine phosphorylase.